The sequence spans 100 residues: Co-chaperonin GroES (100 aa).

Belongs to the GroES chaperonin family. Heptamer of 7 subunits arranged in a ring. Interacts with the chaperonin GroEL.

The protein resides in the cytoplasm. Together with the chaperonin GroEL, plays an essential role in assisting protein folding. The GroEL-GroES system forms a nano-cage that allows encapsulation of the non-native substrate proteins and provides a physical environment optimized to promote and accelerate protein folding. GroES binds to the apical surface of the GroEL ring, thereby capping the opening of the GroEL channel. This Mycobacterium tuberculosis (strain CDC 1551 / Oshkosh) protein is Co-chaperonin GroES.